Here is a 672-residue protein sequence, read N- to C-terminus: MEPPCTSDCSQIKVFYYLDDETTPYVSVIEAREGVATLGNFKNSFTKRGYKYYAKELDPDIQREVKVELTTDSDRLRKSQNGFYEIFLVSTPGYGTLPRNSGTMTRPQRTALDKRRRRSADFDATPYSDASLAPSTIVSRRAGEHLAELYTSNSEDPYQYDEHTRRTGDDSSLYEPLAARDMNKIYDDDRRRKKQKKERFRRPYVPSTISSATESSVNSGLPRILEIYLPMKNVPYLGLSVCTIDGHIFVSEIAPEGAVEKDGRVNVGDQILQVNRVSFEELSGPQAVRSLREAASSKRPITLYISKFARGAPSEYDDPLASMASETMPLDVGVWVETAVQNTEKMKALGLDPQEQTATTIDDGTLPFTSTASDDEERMLYDQRRNGIPRALIEEAERKRENEQNEKIEQLTEMIDPIIVVRSMARPDSGLAVKNRKWLKILVPMSFIGRDLVDWLVDHMADIHNRKKARIYAARLLAAGLIRHVVSKLTFTEKCYYVFGDGILGNDRNSTDTTGTSGTTMRVEATTEVTYVGSPAPHALAARVGRNIPHRLETTTLSPVAHDQTWLRRRRDCESPMTNDYASMVGESQIGMNPVGNYHVFGTKNNHRQVPAPSQVTSSSLTNGSGGLGGPPPTPLSSTMVLAASPIQSQNAVNHDFDGENSSNSRTRILRT.

The DIX domain maps to Cys9–Thr91. 3 disordered regions span residues Leu97–Tyr127, Tyr150–Tyr174, and Asp187–Ser215. The span at Pro98 to Gln108 shows a compositional bias: polar residues. Positions Tyr160–Asp169 are enriched in basic and acidic residues. Residues Arg191–Arg202 are compositionally biased toward basic residues. A PDZ domain is found at Glu226–Ala294. The region spanning Pro427–Asp501 is the DEP domain. Residues Lys604–Thr672 are disordered. Residues Glu660–Thr672 are compositionally biased toward polar residues.

This sequence belongs to the DSH family.

It is found in the cytoplasm. It localises to the cell cortex. Its subcellular location is the cell membrane. The protein resides in the cell junction. Functionally, plays a role in the signal transduction pathways mediated by multiple Wnt genes. Functions redundantly with other dishevelled family members throughout development. During embryonic and larval development, controls cell migration and/or cell fate specification of hypodermal cells, hypodermal seam cells, vulval precursor cells and, through distal tip cell migration, somatic gonad precursor cells. In early embryos, regulates the orientation of the mitotic spindle of blastomeres and specifically, along with dsh-2, is required for the correct mitotic spindle orientation of the ABar blastomere division plane. Controls the polarity and the asymmetric localization of downstream components of the wnt/beta-catenin asymmetry pathway, and in particular, controls the asymmetric localization of the wnt receptor lin-17/Frizzled in ectodermal blast B cells. May act redundantly with dsh-2 to regulate the expression and nuclear localization of the beta-catenin homolog wrm-2, but alone seems to be required for the polarity of wrm-2 during the asymmetric cell division of hypodermal seam cells. Also, maintains the polarity and migration of QL neuroblasts in larvae. During the embryonic development of touch receptor neurons, may act redundantly with dsh-1, downstream of wnt signaling ligands and the wnt receptor lin-17/Frizzled, to direct the growth of neurites of touch receptor neurons towards the anterior of the body of the worm and towards the PLM touch receptor neuron and other tail neurons. May play a role in the guidance of posterior D-type motor neuron axons along the anteroposterior axis. The chain is Segment polarity protein dishevelled homolog mig-5 from Caenorhabditis elegans.